Consider the following 473-residue polypeptide: Kynurenine 3-monooxygenase (473 aa).

This sequence belongs to the aromatic-ring hydroxylase family. KMO subfamily. Requires FAD as cofactor.

It localises to the mitochondrion outer membrane. The catalysed reaction is L-kynurenine + NADPH + O2 + H(+) = 3-hydroxy-L-kynurenine + NADP(+) + H2O. It functions in the pathway cofactor biosynthesis; NAD(+) biosynthesis; quinolinate from L-kynurenine: step 1/3. Catalyzes the hydroxylation of L-kynurenine (L-Kyn) to form 3-hydroxy-L-kynurenine (L-3OHKyn). Required for synthesis of quinolinic acid. The sequence is that of Kynurenine 3-monooxygenase from Debaryomyces hansenii (strain ATCC 36239 / CBS 767 / BCRC 21394 / JCM 1990 / NBRC 0083 / IGC 2968) (Yeast).